The following is a 369-amino-acid chain: Anhydro-N-acetylmuramic acid kinase (369 aa).

Position 12–19 (12–19) interacts with ATP; the sequence is GTSMDGVD.

Belongs to the anhydro-N-acetylmuramic acid kinase family.

The enzyme catalyses 1,6-anhydro-N-acetyl-beta-muramate + ATP + H2O = N-acetyl-D-muramate 6-phosphate + ADP + H(+). The protein operates within amino-sugar metabolism; 1,6-anhydro-N-acetylmuramate degradation. It functions in the pathway cell wall biogenesis; peptidoglycan recycling. Its function is as follows. Catalyzes the specific phosphorylation of 1,6-anhydro-N-acetylmuramic acid (anhMurNAc) with the simultaneous cleavage of the 1,6-anhydro ring, generating MurNAc-6-P. Is required for the utilization of anhMurNAc either imported from the medium or derived from its own cell wall murein, and thus plays a role in cell wall recycling. The polypeptide is Anhydro-N-acetylmuramic acid kinase (Shewanella halifaxensis (strain HAW-EB4)).